The sequence spans 355 residues: Molybdenum import ATP-binding protein ModC (355 aa).

The ABC transporter domain occupies M1–A233. ATP is bound at residue G31 to T38. The region spanning G291–A355 is the Mop domain.

The protein belongs to the ABC transporter superfamily. Molybdate importer (TC 3.A.1.8) family. The complex is composed of two ATP-binding proteins (ModC), two transmembrane proteins (ModB) and a solute-binding protein (ModA).

It is found in the cell inner membrane. It catalyses the reaction molybdate(out) + ATP + H2O = molybdate(in) + ADP + phosphate + H(+). In terms of biological role, part of the ABC transporter complex ModABC involved in molybdenum import. Responsible for energy coupling to the transport system. This Rhizobium johnstonii (strain DSM 114642 / LMG 32736 / 3841) (Rhizobium leguminosarum bv. viciae) protein is Molybdenum import ATP-binding protein ModC.